Here is an 832-residue protein sequence, read N- to C-terminus: Mechanosensitive cation channel TMEM63B (832 aa).

At 1 to 40 (MLPFLLATLGTTALNNSNPKDYCYSARIRSTVLQGLPFGG) the chain is on the extracellular side. The chain crosses the membrane as a helical span at residues 41 to 65 (VPTVLALDFMCFLALLFLFSILRKV). Cysteine 51 is lipidated: S-palmitoyl cysteine. The Cytoplasmic segment spans residues 66–145 (AWDYGRLALV…KDDEIRDKCG (80 aa)). The Mediates endoplasmic reticulum retention motif lies at 86 to 88 (RDR). 4 positions are modified to phosphoserine: serine 111, serine 113, serine 114, and serine 115. Cysteine 126 carries the S-palmitoyl cysteine lipid modification. The helical transmembrane segment at 146–178 (GDAVHYLSFQRHIIGLLVVVGVLSVGIVLPVNF) threads the bilayer. Residues 179–202 (SGDLLENNAYSFGRTTIANLKSGN) lie on the Extracellular side of the membrane. The helical transmembrane segment at 203–227 (NLLWLHTSFAFLYLLLTVYSMRRHT) threads the bilayer. The Cytoplasmic portion of the chain corresponds to 228–427 (SKMRYKEDDL…IYWEHLSIRG (200 aa)). The segment at 231–426 (RYKEDDLVKR…NIYWEHLSIR (196 aa)) is intracellular linker IL2; confers mechanosensitivity. S-palmitoyl cysteine attachment occurs at residues cysteine 382 and cysteine 398. Residues 428–457 (FIWWLRCLVINVVLFILLFFLTTPAIIITT) form a helical membrane-spanning segment. Over 458–472 (MDKFNVTKPVEYLNN) the chain is Extracellular. Asparagine 462 is a glycosylation site (N-linked (GlcNAc...) asparagine). The helical transmembrane segment at 473 to 502 (PIITQFFPTLLLWCFSALLPTIVYYSAFFE) threads the bilayer. Residues 503 to 506 (AHWT) lie on the Cytoplasmic side of the membrane. A helical transmembrane segment spans residues 507–543 (RSGENRTTMHKCYTFLIFMVLLLPSLGLSSLDLFFRW). At 544 to 566 (LFDKKFLAEAAIRFECVFLPDNG) the chain is on the extracellular side. The helical transmembrane segment at 567 to 599 (AFFVNYVIASAFIGNAMDLLRIPGLLMYMIRLC) threads the bilayer. Residues 567–599 (AFFVNYVIASAFIGNAMDLLRIPGLLMYMIRLC) are gating helix. Residues 600–619 (LARSAAERRNVKRHQAYEFQ) are Cytoplasmic-facing. The chain crosses the membrane as a helical span at residues 620–638 (FGAAYAWMMCVFTVVMTYS). Over 639 to 641 (ITC) the chain is Extracellular. Residues 642–666 (PIIVPFGLMYMLLKHLVDRYNLYYA) traverse the membrane as a helical segment. The Cytoplasmic segment spans residues 667 to 673 (YLPAKLD). A helical membrane pass occupies residues 674 to 702 (KKIHSGAVNQVVAAPILCLFWLLFFSTMR). The Extracellular portion of the chain corresponds to 703 to 707 (TGFLA). The chain crosses the membrane as a helical span at residues 708–728 (PTSMFTFVVLVITIVICLCHV). 2 S-palmitoyl cysteine lipidation sites follow: cysteine 726 and cysteine 729. At 729–832 (CFGHFKYLSA…DSLIENEIHQ (104 aa)) the chain is on the cytoplasmic side. The tract at residues 780–814 (EVDGDGDGAPGSSGDEPPSSSSQDEELLMPPDALT) is disordered. The segment covering 789–801 (PGSSGDEPPSSSS) has biased composition (low complexity).

It belongs to the CSC1 (TC 1.A.17) family. In terms of assembly, monomer. Interacts with SLC19A2; interaction is required for the phospholipid scramblase activity. Palmitoylation is required for localization to the plasma membrane and stability. In terms of processing, N-Glycosylated.

It localises to the cell membrane. It is found in the endoplasmic reticulum membrane. The protein resides in the lysosome membrane. The protein localises to the early endosome membrane. It carries out the reaction Ca(2+)(in) = Ca(2+)(out). The enzyme catalyses Mg(2+)(in) = Mg(2+)(out). It catalyses the reaction K(+)(in) = K(+)(out). The catalysed reaction is Na(+)(in) = Na(+)(out). It carries out the reaction Cs(+)(in) = Cs(+)(out). The enzyme catalyses a 1,2-diacyl-sn-glycero-3-phosphocholine(in) = a 1,2-diacyl-sn-glycero-3-phosphocholine(out). It catalyses the reaction a sphingomyelin(in) = a sphingomyelin(out). Mechanosensitive cation channel with low conductance and high activation threshold. Osmosensitive cation channel preferentially activated by hypotonic stress. Also acts as a phospholipid scramblase in response to changes in membrane structure: upon changes in membrane curvature and thickness, alters its conformation and translocates phospholipids, such as phosphatidylcholine and sphingomyelin, thereby controlling plasma membrane lipid distribution. Forms a heterodimer with SLC19A2, which mediates phospholipid scramblase activity following Ca(2+) stimulation. Expressed in excitatory neurons of the subfornical organ and functions as a thirst receptor that mediates neuronal response to hyperosmolality to drive thirst and drinking behavior. Facilitates intestinal motility by promoting proliferation of intestinal stem cells. Essential for the baby's first breath and respiration throughout life. Upon lung inflation conducts cation currents in alveolar type 1 and 2 cells triggering lamellar body exocytosis and surfactant secretion into airspace. Acts as an osmosensor in cochlear outer hair cells (OHCs) where it mediates calcium influx and regulatory volume decrease response. Required for the maintenance of OHC morphology, OHC survival and normal hearing. This is Mechanosensitive cation channel TMEM63B from Homo sapiens (Human).